Here is a 447-residue protein sequence, read N- to C-terminus: Signal recognition particle 54 kDa protein (447 aa).

Residues 103-110 (GVQGSGKT), 185-189 (DTAGR), and 245-248 (TKMD) each bind GTP.

It belongs to the GTP-binding SRP family. SRP54 subfamily. In terms of assembly, part of the signal recognition particle protein translocation system, which is composed of SRP and FtsY. Archaeal SRP consists of a 7S RNA molecule of 300 nucleotides and two protein subunits: SRP54 and SRP19.

The protein resides in the cytoplasm. The enzyme catalyses GTP + H2O = GDP + phosphate + H(+). Involved in targeting and insertion of nascent membrane proteins into the cytoplasmic membrane. Binds to the hydrophobic signal sequence of the ribosome-nascent chain (RNC) as it emerges from the ribosomes. The SRP-RNC complex is then targeted to the cytoplasmic membrane where it interacts with the SRP receptor FtsY. This chain is Signal recognition particle 54 kDa protein, found in Saccharolobus islandicus (strain Y.N.15.51 / Yellowstone #2) (Sulfolobus islandicus).